A 485-amino-acid chain; its full sequence is 3-isopropylmalate dehydratase large subunit (485 aa).

Cys367, Cys427, and Cys430 together coordinate [4Fe-4S] cluster. Residues Ser439–Asn451 show a composition bias toward polar residues. The tract at residues Ser439 to Thr462 is disordered.

This sequence belongs to the aconitase/IPM isomerase family. LeuC type 1 subfamily. In terms of assembly, heterodimer of LeuC and LeuD. [4Fe-4S] cluster serves as cofactor.

It catalyses the reaction (2R,3S)-3-isopropylmalate = (2S)-2-isopropylmalate. It participates in amino-acid biosynthesis; L-leucine biosynthesis; L-leucine from 3-methyl-2-oxobutanoate: step 2/4. Catalyzes the isomerization between 2-isopropylmalate and 3-isopropylmalate, via the formation of 2-isopropylmaleate. The protein is 3-isopropylmalate dehydratase large subunit of Actinoplanes teichomyceticus.